The sequence spans 159 residues: Regulatory protein RecX (159 aa).

It belongs to the RecX family.

It localises to the cytoplasm. Functionally, modulates RecA activity. The sequence is that of Regulatory protein RecX from Ralstonia pickettii (strain 12J).